The following is a 111-amino-acid chain: Large ribosomal subunit protein uL22 (111 aa).

This sequence belongs to the universal ribosomal protein uL22 family. Part of the 50S ribosomal subunit.

In terms of biological role, this protein binds specifically to 23S rRNA; its binding is stimulated by other ribosomal proteins, e.g. L4, L17, and L20. It is important during the early stages of 50S assembly. It makes multiple contacts with different domains of the 23S rRNA in the assembled 50S subunit and ribosome. Functionally, the globular domain of the protein is located near the polypeptide exit tunnel on the outside of the subunit, while an extended beta-hairpin is found that lines the wall of the exit tunnel in the center of the 70S ribosome. The chain is Large ribosomal subunit protein uL22 from Chlamydia felis (strain Fe/C-56) (Chlamydophila felis).